We begin with the raw amino-acid sequence, 195 residues long: Peptidyl-tRNA hydrolase (195 aa).

Y18 is a binding site for tRNA. H23 (proton acceptor) is an active-site residue. Residues Y69, N71, and N117 each contribute to the tRNA site.

The protein belongs to the PTH family. In terms of assembly, monomer.

It is found in the cytoplasm. It carries out the reaction an N-acyl-L-alpha-aminoacyl-tRNA + H2O = an N-acyl-L-amino acid + a tRNA + H(+). In terms of biological role, hydrolyzes ribosome-free peptidyl-tRNAs (with 1 or more amino acids incorporated), which drop off the ribosome during protein synthesis, or as a result of ribosome stalling. Functionally, catalyzes the release of premature peptidyl moieties from peptidyl-tRNA molecules trapped in stalled 50S ribosomal subunits, and thus maintains levels of free tRNAs and 50S ribosomes. This is Peptidyl-tRNA hydrolase from Nitrosomonas europaea (strain ATCC 19718 / CIP 103999 / KCTC 2705 / NBRC 14298).